The primary structure comprises 1468 residues: ABC transporter G family member 34 (1468 aa).

Residues 33 to 53 are disordered; the sequence is NGAFSRSSSSSSRRMRGEEDD. Positions 178–450 constitute an ABC transporter 1 domain; sequence ANALGILPTR…FELMGFKCPE (273 aa). 211–218 serves as a coordination point for ATP; that stretch reads GPPGSGKT. In terms of domain architecture, ABC transmembrane type-2 1 spans 528–741; that stretch reads ELLKANIDRE…AQNAVSVNEF (214 aa). A run of 6 helical transmembrane segments spans residues 546–566, 575–595, 634–654, 666–686, 690–710, and 778–798; these read FVYIFRTIQLMTVSAMAMTVF, SVADGVIFMGALFFAVMMIML, SPMSFIEVGGFCFMSYYVIGF, LLMLAVSQMAAALFRFVGGAA, IVANVFGSFMLLIFMVLGGFI, and IGFGALLGFIMLFNILFTLAL. Residues 871–1123 form the ABC transporter 2 domain; it reads LTFEDIKYSV…ELIKYFEGIQ (253 aa). 916-923 is a binding site for ATP; that stretch reads GVSGAGKT. The ABC transmembrane type-2 2 domain occupies 1196–1410; it reads IQCLACLWKQ…TLYGLIVSQY (215 aa). Transmembrane regions (helical) follow at residues 1217–1237, 1247–1267, 1303–1323, 1330–1350, 1360–1380, 1387–1407, and 1440–1460; these read AIRLFFTTVIALIFGTIFWDL, LFNAMGSMYAAVLFIGVLNGQ, FPYTLVQSVIYSIIVYSMIGF, FFWYLFFMFFTLLYFTFYGMM, VASIVSSAFYAIWNLFTGFVI, VWWRWYCWICPVAWTLYGLIV, and FVAVVIVAFTMLFAFLFGFAI.

Belongs to the ABC transporter superfamily. ABCG family. PDR (TC 3.A.1.205) subfamily.

The protein resides in the membrane. Functionally, may be a general defense protein. The protein is ABC transporter G family member 34 of Oryza sativa subsp. japonica (Rice).